We begin with the raw amino-acid sequence, 302 residues long: Glycine--tRNA ligase alpha subunit (302 aa).

The protein belongs to the class-II aminoacyl-tRNA synthetase family. In terms of assembly, tetramer of two alpha and two beta subunits.

Its subcellular location is the cytoplasm. It carries out the reaction tRNA(Gly) + glycine + ATP = glycyl-tRNA(Gly) + AMP + diphosphate. The protein is Glycine--tRNA ligase alpha subunit of Xanthomonas oryzae pv. oryzae (strain MAFF 311018).